We begin with the raw amino-acid sequence, 159 residues long: SsrA-binding protein (159 aa).

The protein belongs to the SmpB family.

Its subcellular location is the cytoplasm. Functionally, required for rescue of stalled ribosomes mediated by trans-translation. Binds to transfer-messenger RNA (tmRNA), required for stable association of tmRNA with ribosomes. tmRNA and SmpB together mimic tRNA shape, replacing the anticodon stem-loop with SmpB. tmRNA is encoded by the ssrA gene; the 2 termini fold to resemble tRNA(Ala) and it encodes a 'tag peptide', a short internal open reading frame. During trans-translation Ala-aminoacylated tmRNA acts like a tRNA, entering the A-site of stalled ribosomes, displacing the stalled mRNA. The ribosome then switches to translate the ORF on the tmRNA; the nascent peptide is terminated with the 'tag peptide' encoded by the tmRNA and targeted for degradation. The ribosome is freed to recommence translation, which seems to be the essential function of trans-translation. This is SsrA-binding protein from Idiomarina loihiensis (strain ATCC BAA-735 / DSM 15497 / L2-TR).